A 745-amino-acid polypeptide reads, in one-letter code: Copper-transporting ATPase (745 aa).

Residues 1–67 (MKESFYIEGM…LIEKLGYSPK (67 aa)) form the HMA domain. The Cytoplasmic segment spans residues 1 to 83 (MKESFYIEGM…KKEFFSPNVK (83 aa)). Cu cation-binding residues include cysteine 12 and cysteine 15. The helical transmembrane segment at 84 to 104 (LALAVIFTLFVVYLSMGAMLS) threads the bilayer. Residues 105 to 124 (PSLLPESLLTINHHSNFLNA) are Extracellular-facing. Residues 125-144 (CLQLIGALIVMHLGRDFYIQ) form a helical membrane-spanning segment. Residues 145–151 (GFKALWH) lie on the Cytoplasmic side of the membrane. Residues 152-172 (RQPNMSSLIAIGTSAALISSL) form a helical membrane-spanning segment. Residues 173-194 (WQLYLVYTNHYTDQWSYGHYYF) are Extracellular-facing. The chain crosses the membrane as a helical span at residues 195-215 (ESVCVILMFVMVGKRIENVSK). The Cytoplasmic portion of the chain corresponds to 216–343 (DKALDAMQAL…KAEISRLADK (128 aa)). The chain crosses the membrane as a helical span at residues 344–366 (VSSVFVPSVIAIAVLAFVVWLII). Topologically, residues 367–379 (APKPDFWWNFRTA) are extracellular. The helical transmembrane segment at 380-397 (LEVFVSVLVISCPCALGL) threads the bilayer. Topologically, residues 398-685 (ATPMSILVAN…KLSQATIKNI (288 aa)) are cytoplasmic. Residue aspartate 435 is the 4-aspartylphosphate intermediate of the active site. Mg(2+) is bound by residues aspartate 631 and aspartate 635. A helical membrane pass occupies residues 686–705 (KENLFWAFCYNSVFIPLACG). The Extracellular segment spans residues 706–716 (VLYKANIMLSP). Residues 717–735 (AIAGLAMSLSSVSVVLNSQ) traverse the membrane as a helical segment. Over 736 to 745 (RLRNFKIKDH) the chain is Cytoplasmic.

This sequence belongs to the cation transport ATPase (P-type) (TC 3.A.3) family. Type IB subfamily.

The protein localises to the cell membrane. It catalyses the reaction Cu(2+)(in) + ATP + H2O = Cu(2+)(out) + ADP + phosphate + H(+). Probably involved in copper export. The chain is Copper-transporting ATPase (copA) from Helicobacter pylori (strain J99 / ATCC 700824) (Campylobacter pylori J99).